The chain runs to 397 residues: Elongation factor Tu-1 (397 aa).

Positions 10-206 (KPHVNIGTIG…AVDENIPEPE (197 aa)) constitute a tr-type G domain. Positions 19–26 (GHIDHGKT) are G1. A GTP-binding site is contributed by 19–26 (GHIDHGKT). Residue threonine 26 participates in Mg(2+) binding. Residues 62 to 66 (GITIS) are G2. A G3 region spans residues 83 to 86 (DCPG). GTP contacts are provided by residues 83–87 (DCPGH) and 138–141 (NKAD). The segment at 138 to 141 (NKAD) is G4. The segment at 176 to 178 (SAL) is G5. Threonine 386 bears the Phosphothreonine mark.

The protein belongs to the TRAFAC class translation factor GTPase superfamily. Classic translation factor GTPase family. EF-Tu/EF-1A subfamily. In terms of assembly, monomer. Post-translationally, phosphorylated on threonine and serine.

The protein localises to the cytoplasm. The catalysed reaction is GTP + H2O = GDP + phosphate + H(+). Its function is as follows. GTP hydrolase that promotes the GTP-dependent binding of aminoacyl-tRNA to the A-site of ribosomes during protein biosynthesis. This is Elongation factor Tu-1 from Streptomyces collinus.